The chain runs to 168 residues: Thiol peroxidase (168 aa).

A Thioredoxin domain is found at 19–168; it reads PQAGSKAQTF…YEAALAVLKA (150 aa). Cysteine 61 functions as the Cysteine sulfenic acid (-SOH) intermediate in the catalytic mechanism. Cysteine 61 and cysteine 95 are joined by a disulfide.

This sequence belongs to the peroxiredoxin family. Tpx subfamily. As to quaternary structure, homodimer.

The catalysed reaction is a hydroperoxide + [thioredoxin]-dithiol = an alcohol + [thioredoxin]-disulfide + H2O. In terms of biological role, thiol-specific peroxidase that catalyzes the reduction of hydrogen peroxide and organic hydroperoxides to water and alcohols, respectively. Plays a role in cell protection against oxidative stress by detoxifying peroxides. This chain is Thiol peroxidase, found in Shigella dysenteriae.